The following is a 235-amino-acid chain: Glucosamine-6-phosphate deaminase (235 aa).

Catalysis depends on Asp62, which acts as the Proton acceptor; for enolization step. Catalysis depends on Asn128, which acts as the For ring-opening step. The active-site Proton acceptor; for ring-opening step is the His130. Glu135 (for ring-opening step) is an active-site residue.

Belongs to the glucosamine/galactosamine-6-phosphate isomerase family. NagB subfamily.

The enzyme catalyses alpha-D-glucosamine 6-phosphate + H2O = beta-D-fructose 6-phosphate + NH4(+). It participates in amino-sugar metabolism; N-acetylneuraminate degradation; D-fructose 6-phosphate from N-acetylneuraminate: step 5/5. Its function is as follows. Catalyzes the reversible isomerization-deamination of glucosamine 6-phosphate (GlcN6P) to form fructose 6-phosphate (Fru6P) and ammonium ion. This chain is Glucosamine-6-phosphate deaminase, found in Streptococcus sanguinis (strain SK36).